Reading from the N-terminus, the 86-residue chain is MKTLLLTLVVVAIVCLDLGYTLTCLICPEKDCQKVHTCRNEEKICVKRFYDKNQLGWRAQRGCAVSCPKAKPNETVQCCSTDKCNK.

An N-terminal signal peptide occupies residues 1 to 23 (MKTLLLTLVVVAIVCLDLGYTLT). 5 cysteine pairs are disulfide-bonded: Cys24–Cys45, Cys27–Cys32, Cys38–Cys63, Cys67–Cys78, and Cys79–Cys84.

It belongs to the three-finger toxin family. Ancestral subfamily. Orphan group II sub-subfamily. Expressed by the venom gland.

The protein localises to the secreted. Functionally, binds with low affinity to muscular (alpha-1-beta-1-delta-epsilon/CHRNA1-CHRNB1-CHRND-CHRNE) and very low affinity to neuronal (alpha-7/CHRNA7) nicotinic acetylcholine receptor (nAChR). The polypeptide is Weak toxin 1 (Bungarus candidus (Malayan krait)).